Reading from the N-terminus, the 238-residue chain is Ribonuclease PH (238 aa).

Phosphate-binding positions include arginine 86 and 124–126 (GTR).

The protein belongs to the RNase PH family. As to quaternary structure, homohexameric ring arranged as a trimer of dimers.

It carries out the reaction tRNA(n+1) + phosphate = tRNA(n) + a ribonucleoside 5'-diphosphate. Its function is as follows. Phosphorolytic 3'-5' exoribonuclease that plays an important role in tRNA 3'-end maturation. Removes nucleotide residues following the 3'-CCA terminus of tRNAs; can also add nucleotides to the ends of RNA molecules by using nucleoside diphosphates as substrates, but this may not be physiologically important. Probably plays a role in initiation of 16S rRNA degradation (leading to ribosome degradation) during starvation. The sequence is that of Ribonuclease PH from Psychrobacter sp. (strain PRwf-1).